Consider the following 608-residue polypeptide: RAS guanyl-releasing protein 2 (608 aa).

One can recognise an N-terminal Ras-GEF domain in the interval 4-126 (TLDLDKGCTV…SLIDIESVPT (123 aa)). Phosphoserine occurs at positions 116, 117, and 147. The region spanning 154-387 (EPMELAEHLT…YQLSLQREPR (234 aa)) is the Ras-GEF domain. A disordered region spans residues 382–405 (LQREPRSKSSPTSPTSCTPPPRPP). EF-hand domains lie at 426–461 (HIEK…FPYL) and 463–490 (AFGD…SSSV). Ca(2+)-binding residues include aspartate 439, aspartate 441, aspartate 443, histidine 445, glutamate 450, aspartate 468, asparagine 470, aspartate 472, cysteine 474, and glutamate 479. The Phorbol-ester/DAG-type zinc finger occupies 498 to 548 (VHNLQESNSLRPVACRHCKALILGIYKQGLKCRACGVNCHKQCKDRLSVEC). Serine 554 and serine 575 each carry phosphoserine. Positions 555–596 (VSLEGSAPSPSPTHTHHRAFSFSLPRPGRRSSRPPEIREEEV) are disordered.

The protein belongs to the RASGRP family. In terms of assembly, forms a signaling complex with RAP1 and BRAF. Interacts with F-actin. Interacts with RAP1. In terms of tissue distribution, expressed in striatal neurons (at protein level). Expressed in the hematopoietic system. Detected in olfactory structures and deep cortical layers of brain.

The protein resides in the cytoplasm. It is found in the cytosol. It localises to the cell membrane. Its subcellular location is the synapse. The protein localises to the synaptosome. The protein resides in the cell projection. It is found in the ruffle membrane. Its function is as follows. Functions as a calcium- and DAG-regulated nucleotide exchange factor specifically activating Rap through the exchange of bound GDP for GTP. May also activate other GTPases such as RRAS, RRAS2, NRAS, KRAS but not HRAS. Functions in aggregation of platelets and adhesion of T-lymphocytes and neutrophils probably through inside-out integrin activation. May function in the muscarinic acetylcholine receptor M1/CHRM1 signaling pathway. This Rattus norvegicus (Rat) protein is RAS guanyl-releasing protein 2 (Rasgrp2).